Reading from the N-terminus, the 1235-residue chain is ATP-dependent helicase/nuclease subunit A (1235 aa).

The UvrD-like helicase ATP-binding domain occupies 12–482 (SLWTDDQWKA…IDLSQNFRSR (471 aa)). An ATP-binding site is contributed by 33 to 40 (AAAGSGKT). The 292-residue stretch at 509–800 (AAELTLGASF…RMMTIHASKG (292 aa)) folds into the UvrD-like helicase C-terminal domain.

This sequence belongs to the helicase family. AddA subfamily. As to quaternary structure, heterodimer of AddA and AddB/RexB. Mg(2+) serves as cofactor.

The enzyme catalyses Couples ATP hydrolysis with the unwinding of duplex DNA by translocating in the 3'-5' direction.. The catalysed reaction is ATP + H2O = ADP + phosphate + H(+). In terms of biological role, the heterodimer acts as both an ATP-dependent DNA helicase and an ATP-dependent, dual-direction single-stranded exonuclease. Recognizes the chi site generating a DNA molecule suitable for the initiation of homologous recombination. The AddA nuclease domain is required for chi fragment generation; this subunit has the helicase and 3' -&gt; 5' nuclease activities. The protein is ATP-dependent helicase/nuclease subunit A of Listeria monocytogenes serotype 4b (strain F2365).